Reading from the N-terminus, the 227-residue chain is MVSASSLLLAASAIAGVFSAPAAAPVSENLNVLQERALTSSATGTSGGYYYSFWTDGSGGVTYSNGANGQYAVSWTGNKGNFVGGKGWAVGSERSISYTGSYKPNGNSYLSVYGWTTSPLIEYYIVEDFGTYDPSSAATEIGSVTSDGSTYKILETTRTNQPSVQGTATFKQYWSVRTSKRTSGTVTTANHFAAWKKLGLTLGSTYNYQIVAVEGYQSSGSASITVS.

Residues 1–36 (MVSASSLLLAASAIAGVFSAPAAAPVSENLNVLQER) form the signal peptide. In terms of domain architecture, GH11 spans 37-227 (ALTSSATGTS…SSGSASITVS (191 aa)). Residues 112-136 (VYGWTTSPLIEYYIVEDFGTYDPSS) are necrosis inducing domain. The Nucleophile role is filled by E122. E214 serves as the catalytic Proton donor.

Belongs to the glycosyl hydrolase 11 (cellulase G) family.

The protein resides in the secreted. The catalysed reaction is Endohydrolysis of (1-&gt;4)-beta-D-xylosidic linkages in xylans.. Its pathway is glycan degradation; xylan degradation. Significantly inhibited by the wheat xylanase inhibiting protein I (XIP-I) and the proteinaceous endoxylanase Triticum aestivum xylanase inhibitors I (TAXI-I), whereas no inhibition is detected with TAXI-II. Endo-1,4-beta-xylanase involved in the hydrolysis of xylan, a major structural heterogeneous polysaccharide found in plant biomass representing the second most abundant polysaccharide in the biosphere, after cellulose. Required for plant infection and the appearance of secondary lesions. Is able to induce necrosis on leaves, seedling growth inhibition, induction of a ROS burst, electrolyte leakage, cytoplasm shrinkage, autofluorescence, cell death, and induction of defense genes, and this abilities are independent of the catalytic activity. Only exhibits elicitor activity in certain plants such as tomato, but not in N.benthamiana. This is Endo-1,4-beta-xylanase 11A from Botryotinia fuckeliana (strain B05.10) (Noble rot fungus).